Here is a 333-residue protein sequence, read N- to C-terminus: C4-dicarboxylate-binding periplasmic protein DctP (333 aa).

The signal sequence occupies residues 1–26 (MLTRRILGALVGATALSLALSVPALA).

This sequence belongs to the bacterial solute-binding protein 7 family. The complex comprises the extracytoplasmic solute receptor protein DctP, and the two transmembrane proteins DctQ and DctM.

It is found in the periplasm. In terms of biological role, part of the tripartite ATP-independent periplasmic (TRAP) transport system DctPQM involved in C4-dicarboxylates uptake. Binds C4-dicarboxylates such as fumarate, succinate, L-malate and D-malate. The chain is C4-dicarboxylate-binding periplasmic protein DctP from Rhodobacter capsulatus (Rhodopseudomonas capsulata).